A 500-amino-acid chain; its full sequence is MDFRVKSGRLEKQRSACIVAGVFESRQFSFIAEQLDKISKGYISALLRSGELEGQVGQVLLLYHVPYIMSKRVLLIGCGKKRELDERKYKKIIINTVNALNNTGSIEAMCFLTELQVQGKNTYWKIRQAVEIAHNLCYTFDKFKKTKKISYQLRRITFNITNRRELTSSKCALQHGIAIAAGIKAAKDLANMPPNICNSAYLASKAHELANSNKHINASVLGKQQMKELGMNAYLAVGQGSANESLMSIIEYQGHLDSKARPIVLVGKGLTFDSGGISIKPSNKMNEMKYDMCGAATVYGVMRVVLSLNLPLNIIGVLAGCENMVDSCSFRPGDVLTTLSGQTVEVLNTDAEGRLVLCDTLTYIERFNPEIVIDIATLTGACVIALGHHFTGMMSNHNPLSNELSSAAEQAGDYIWPLPLSNEFHEELDSHCADMTNVGGSAGGAITAGCFLSRFTSKYHWAHLDIAGTAWNTEKHQGATGRPVAMLSQFLINRSISDNK.

Mn(2+) contacts are provided by Lys268 and Asp273. Residue Lys280 is part of the active site. Mn(2+) is bound by residues Asp291, Asp350, and Glu352. Arg354 is an active-site residue.

Belongs to the peptidase M17 family. The cofactor is Mn(2+).

It localises to the cytoplasm. It catalyses the reaction Release of an N-terminal amino acid, Xaa-|-Yaa-, in which Xaa is preferably Leu, but may be other amino acids including Pro although not Arg or Lys, and Yaa may be Pro. Amino acid amides and methyl esters are also readily hydrolyzed, but rates on arylamides are exceedingly low.. The enzyme catalyses Release of an N-terminal amino acid, preferentially leucine, but not glutamic or aspartic acids.. Presumably involved in the processing and regular turnover of intracellular proteins. Catalyzes the removal of unsubstituted N-terminal amino acids from various peptides. This Baumannia cicadellinicola subsp. Homalodisca coagulata protein is Probable cytosol aminopeptidase.